Here is a 419-residue protein sequence, read N- to C-terminus: Putative actin-fragmin kinase DDB_G0279609 (419 aa).

The segment at 73 to 94 is disordered; it reads INNNNNSINNNNNNNNKNKNKN.

This sequence belongs to the protein kinase superfamily. AFK Ser/Thr protein kinase family.

The polypeptide is Putative actin-fragmin kinase DDB_G0279609 (Dictyostelium discoideum (Social amoeba)).